The chain runs to 215 residues: METDFSEITNKRFKRGVLSLMPSRRRCPYFRSRASPANRTLLTQPRAFTLDFQSAIPNNIRREYINKLRDQFDTVYESSQVKDYTTKEAEVLKNENYTVKALSRKKVYEKQLIVGSSEFYSQRYKRLIELRASFKRNQDDDGIQITTDNHDLAGAYICTSSPVTNSTKPVIGVVNKCETDILQGKQLYKISLANWYSSLDDNIADLKTRIQSVFG.

This is an uncharacterized protein from Ostreid herpesvirus 1 (isolate France) (OsHV-1).